We begin with the raw amino-acid sequence, 484 residues long: MEIYNTLTRRKENFQPREPGRVCMYVCGPTTYNYIHLGNARPLVFFDTVRRYLIHKGYEVLFVQNFTDVDDKIINRAQEEGDDPLALARRYIGEYFKDADALNVRRADRHPLVSEHIPDIIKMVDELVKKGAAYVVDGNVYFEVRKFAGYGKLSGRTLEDMQAGARVEVDPRKRDPLDFALWKAAKPGEPCWDSPWGPGRPGWHIECSAMSLKYLGTNFDIHGGGYDLIFPHHENEIAQSEAATGQPFVRYWMHNGFITVNEEKMSKSLGNFFLVRDILAKFPPELVRFFLLSTHYRSPLDFDGEKMAAAGRGLERIKTSLRLLYEALERPVSEGVQAVCSRDPFDEIRASFEAAMDDDFNTALAIGAVFDLAREANTAVQRTGPAVSGQDRQILQYALDLFNEFNEVLGIFKVDGASGRLLIDGAAGDDSGLVEGLINLILEVRQEARKRKDWSTADRIRDGLKELGILLEDTPQGVRWKKQG.

Cys-27 is a binding site for Zn(2+). Positions 29-39 (PTTYNYIHLGN) match the 'HIGH' region motif. Zn(2+) contacts are provided by Cys-207, His-232, and Glu-236. The 'KMSKS' region signature appears at 264–268 (KMSKS). Lys-267 is an ATP binding site.

Belongs to the class-I aminoacyl-tRNA synthetase family. As to quaternary structure, monomer. Zn(2+) serves as cofactor.

It is found in the cytoplasm. It carries out the reaction tRNA(Cys) + L-cysteine + ATP = L-cysteinyl-tRNA(Cys) + AMP + diphosphate. The polypeptide is Cysteine--tRNA ligase (Pelotomaculum thermopropionicum (strain DSM 13744 / JCM 10971 / SI)).